Consider the following 672-residue polypeptide: Transketolase (672 aa).

A substrate-binding site is contributed by H35. Thiamine diphosphate contacts are provided by residues H75 and G124 to L126. Residue D162 participates in Mg(2+) binding. Thiamine diphosphate is bound by residues G163 and N192. 2 residues coordinate Mg(2+): N192 and I194. Residues H266, R361, and S388 each coordinate substrate. Residue H266 coordinates thiamine diphosphate. E415 functions as the Proton donor in the catalytic mechanism. F441 provides a ligand contact to thiamine diphosphate. Residues H465, D473, and R524 each contribute to the substrate site.

The protein belongs to the transketolase family. As to quaternary structure, homodimer. Mg(2+) is required as a cofactor. It depends on Ca(2+) as a cofactor. Mn(2+) serves as cofactor. Requires Co(2+) as cofactor. The cofactor is thiamine diphosphate.

The catalysed reaction is D-sedoheptulose 7-phosphate + D-glyceraldehyde 3-phosphate = aldehydo-D-ribose 5-phosphate + D-xylulose 5-phosphate. It functions in the pathway carbohydrate biosynthesis; Calvin cycle. It participates in carbohydrate degradation; pentose phosphate pathway. In terms of biological role, catalyzes the transfer of a two-carbon ketol group from a ketose donor to an aldose acceptor, via a covalent intermediate with the cofactor thiamine pyrophosphate. This is Transketolase (tktA) from Rhodobacter capsulatus (strain ATCC BAA-309 / NBRC 16581 / SB1003).